The sequence spans 499 residues: Chitinase B (499 aa).

The N-terminal stretch at 1 to 41 (MSTRKAVIGYYFIPTNQINNYTETDTSVVPFPVSNITPAKA) is a signal peptide. The 384-residue stretch at 42 to 425 (KQLTHINFSF…AALDRYFNAA (384 aa)) folds into the GH18 domain. Chitin contacts are provided by residues 68 to 69 (DA) and 95 to 98 (GGWY). Glu-144 acts as the Proton donor in catalysis. Residues Tyr-145, 212 to 215 (MTYD), and Trp-403 contribute to the chitin site. Residues 438-498 (LRYTGVGPGN…DSAWLKVGRL (61 aa)) form the Chitin-binding type-3 domain.

It belongs to the glycosyl hydrolase 18 family. Chitinase class II subfamily.

It catalyses the reaction Random endo-hydrolysis of N-acetyl-beta-D-glucosaminide (1-&gt;4)-beta-linkages in chitin and chitodextrins.. The chain is Chitinase B (chiB) from Serratia marcescens.